The sequence spans 196 residues: GTP cyclohydrolase 1 (196 aa).

Positions 85, 88, and 158 each coordinate Zn(2+).

The protein belongs to the GTP cyclohydrolase I family. As to quaternary structure, homomer.

The enzyme catalyses GTP + H2O = 7,8-dihydroneopterin 3'-triphosphate + formate + H(+). It functions in the pathway cofactor biosynthesis; 7,8-dihydroneopterin triphosphate biosynthesis; 7,8-dihydroneopterin triphosphate from GTP: step 1/1. This chain is GTP cyclohydrolase 1, found in Corynebacterium aurimucosum (strain ATCC 700975 / DSM 44827 / CIP 107346 / CN-1) (Corynebacterium nigricans).